A 115-amino-acid chain; its full sequence is uncharacterized protein (115 aa).

The signal sequence occupies residues 1-24 (MLPLCLTFLSFFLSLGGSFKAVMT). Transmembrane regions (helical) follow at residues 39–59 (FWIFNWTVTLIPLNSLVALAI) and 93–113 (YLTSLGSNFGGIFVYPLFLLS).

Its subcellular location is the membrane. This is an uncharacterized protein from Saccharomyces cerevisiae (strain ATCC 204508 / S288c) (Baker's yeast).